A 137-amino-acid chain; its full sequence is uncharacterized protein (137 aa).

The helical transmembrane segment at 75–91 (MFLDAMVILAVASGVSL) threads the bilayer. The interval 93–116 (PQLPGRRSHNASTPGAKKPGKDHG) is disordered.

The protein resides in the membrane. This is an uncharacterized protein from Saccharomyces cerevisiae (strain ATCC 204508 / S288c) (Baker's yeast).